We begin with the raw amino-acid sequence, 102 residues long: Acid shock protein (102 aa).

The N-terminal stretch at 1 to 21 (MKKVLGLVVAAAMGLSSAAFA) is a signal peptide. Low complexity predominate over residues 22–41 (AETATTPAPTATTTKAAPAK). The propeptide occupies 22–58 (AETATTPAPTATTTKAAPAKTTHHKKQHKAAPAQKAQ). The interval 22–102 (AETATTPAPT…PAKPAAQPAA (81 aa)) is disordered. A compositionally biased stretch (basic residues) spans 80 to 90 (AAKKHAGKHSH). Over residues 91 to 102 (QQPAKPAAQPAA) the composition is skewed to low complexity.

Belongs to the Asr family. In terms of processing, proteolytic processing gives rise to the active protein.

Its subcellular location is the periplasm. Required for growth and/or survival at acidic conditions. The polypeptide is Acid shock protein (Escherichia coli (strain SE11)).